The primary structure comprises 588 residues: A-type ATP synthase subunit A 3 (588 aa).

234–241 (GPFGSGKT) lines the ATP pocket.

This sequence belongs to the ATPase alpha/beta chains family. In terms of assembly, has multiple subunits with at least A(3), B(3), C, D, E, F, H, I and proteolipid K(x).

The protein resides in the cell membrane. The enzyme catalyses ATP + H2O + 4 H(+)(in) = ADP + phosphate + 5 H(+)(out). Functionally, component of the A-type ATP synthase that produces ATP from ADP in the presence of a proton gradient across the membrane. The A chain is the catalytic subunit. The chain is A-type ATP synthase subunit A 3 from Methanospirillum hungatei JF-1 (strain ATCC 27890 / DSM 864 / NBRC 100397 / JF-1).